The sequence spans 633 residues: Phospholipid--sterol O-acyltransferase (633 aa).

The Cytoplasmic portion of the chain corresponds to 1–6 (MGANSK). Residues 7–29 (SVTASFTVIAVFFLICGGRTAVE) traverse the membrane as a helical; Signal-anchor for type II membrane protein segment. Residues 30-633 (DETEFHGDYS…TSANMLLQYI (604 aa)) are Lumenal-facing. Catalysis depends on serine 195, which acts as the Acyl-ester intermediate. Residues aspartate 461 and histidine 505 each act as charge relay system in the active site.

It belongs to the AB hydrolase superfamily. Lipase family.

It localises to the microsome membrane. In terms of biological role, involved in lipid catabolism. Essential for sterol esters biosynthesis in leaves and seeds, but not in flowers. Plays a role in controlling the free sterol content of leaves. Catalyzes the transacylation of acyl groups from phospholipids to a variety of different sterols. Prefers phosphatidylethanolamine over phosphatidylcholine as an acyl donor. Not active toward neutral lipids. Highly specific for position sn-2, which in plant lipids is essentially devoid of saturated acyl groups. Broad sterol specificity (cholesterol &gt; campesterol &gt; sitosterol &gt; stigmasterol), but no activity with lupeol or beta-amyrin. The protein is Phospholipid--sterol O-acyltransferase (PSAT) of Arabidopsis thaliana (Mouse-ear cress).